Reading from the N-terminus, the 311-residue chain is Asialoglycoprotein receptor 2 (311 aa).

Positions 1–44 (MAKDFQDIQQLSSEENDHPFHQGEGPGTRRLNPRRGNPFLKGPP) are disordered. The Cytoplasmic portion of the chain corresponds to 1-58 (MAKDFQDIQQLSSEENDHPFHQGEGPGTRRLNPRRGNPFLKGPPPAQPLAQRLCSMVC). The short motif at 5–8 (FQDI) is the Endocytosis signal element. Serine 13 is subject to Phosphoserine. Residue cysteine 54 is the site of S-palmitoyl cysteine attachment. Residues 59-79 (FSLLALSFNILLLVVICVTGS) form a helical; Signal-anchor for type II membrane protein membrane-spanning segment. The Extracellular segment spans residues 80 to 311 (QSEGHGGAQL…KRRNATGEVA (232 aa)). N-linked (GlcNAc...) asparagine glycosylation is found at asparagine 102 and asparagine 170. A C-type lectin domain is found at 176-302 (CCPVNWVEHQ…LQVYRWVCEK (127 aa)). Cystine bridges form between cysteine 177–cysteine 188, cysteine 205–cysteine 300, and cysteine 278–cysteine 292. Residue asparagine 305 is glycosylated (N-linked (GlcNAc...) asparagine).

In terms of assembly, the functioning ligand-binding unit of this receptor is thought to be at least a dimer. Interacts with LASS2. As to quaternary structure, (Microbial infection) Interacts with hepatitis E virus capsid protein ORF2. In terms of tissue distribution, expressed exclusively in hepatic parenchymal cells.

Its subcellular location is the membrane. Mediates the endocytosis of plasma glycoproteins to which the terminal sialic acid residue on their complex carbohydrate moieties has been removed. The receptor recognizes terminal galactose and N-acetylgalactosamine units. After ligand binding to the receptor, the resulting complex is internalized and transported to a sorting organelle, where receptor and ligand are disassociated. The receptor then returns to the cell membrane surface. This is Asialoglycoprotein receptor 2 (ASGR2) from Homo sapiens (Human).